Reading from the N-terminus, the 54-residue chain is Large ribosomal subunit protein bL33 (54 aa).

The protein belongs to the bacterial ribosomal protein bL33 family.

In Buchnera aphidicola subsp. Cinara cedri (strain Cc), this protein is Large ribosomal subunit protein bL33.